We begin with the raw amino-acid sequence, 111 residues long: Aquaporin-2 (111 aa).

At 1–6 (SIAFSR) the chain is on the cytoplasmic side. Residues 7–27 (AVFSEFLATLLFVFFGLGSAL) traverse the membrane as a helical segment. Residues 28–37 (NWPSTVPIPT) lie on the Extracellular side of the membrane. A helical transmembrane segment spans residues 38 to 56 (VLQISMAFGLAIGTLVQTL). The Cytoplasmic portion of the chain corresponds to 57-61 (GHISG). Positions 62–71 (AHINPAVTVA) form an intramembrane region, discontinuously helical. Positions 65-67 (NPA) match the NPA 1 motif. The Cytoplasmic portion of the chain corresponds to 72 to 82 (CLVGCHVSFLR). Residues 83–104 (ATFYVAAQLLGAVAGAALLHKL) form a helical membrane-spanning segment. Topologically, residues 105 to 111 (TPEDIRG) are extracellular.

Belongs to the MIP/aquaporin (TC 1.A.8) family. As to quaternary structure, homotetramer. Serine phosphorylation is necessary and sufficient for expression at the apical membrane. Endocytosis is not phosphorylation-dependent. In terms of processing, N-glycosylated.

It localises to the apical cell membrane. It is found in the basolateral cell membrane. The protein localises to the cell membrane. Its subcellular location is the cytoplasmic vesicle membrane. The protein resides in the golgi apparatus. It localises to the trans-Golgi network membrane. It carries out the reaction H2O(in) = H2O(out). The enzyme catalyses glycerol(in) = glycerol(out). Its function is as follows. Forms a water-specific channel that provides the plasma membranes of renal collecting duct with high permeability to water, thereby permitting water to move in the direction of an osmotic gradient. Plays an essential role in renal water homeostasis. Could also be permeable to glycerol. The sequence is that of Aquaporin-2 from Macroscelides proboscideus (Short-eared elephant shrew).